Consider the following 281-residue polypeptide: MMQFFGTIVTKEEPVNLELDEGDIFHLTKAIIHPKSQGKGKVYLTAVISLMEEDEMEEDDVDDEEESPREDIVEIPIGILEAGKIDQIDLNLHYNFGQIVRFELQAENGAGYVVALSGSVITMEQGGCDDEDCDDEHCINHEDDEEIDSDEEFGDSDQDEEDSDDEEIPQLIAPATKKGKITEISEVPESKKEKTPEPKKVPEPKKEQVKQPTQPQQKKAAAQQPEKANNKPAAASPAKPQNNQSKNAPKQPQQQQQSPAKNNNNKRPQNQNENNKKKQKN.

Acidic residues predominate over residues 142-168 (EDDEEIDSDEEFGDSDQDEEDSDDEEI). A disordered region spans residues 142–281 (EDDEEIDSDE…NENNKKKQKN (140 aa)). A compositionally biased stretch (basic and acidic residues) spans 180 to 209 (KITEISEVPESKKEKTPEPKKVPEPKKEQV). The segment covering 210–273 (KQPTQPQQKK…NNKRPQNQNE (64 aa)) has biased composition (low complexity).

The chain is 32 kDa heat shock protein (hspC) from Dictyostelium discoideum (Social amoeba).